We begin with the raw amino-acid sequence, 321 residues long: tRNA 2-thiolation protein NcsA (321 aa).

K204 is covalently cross-linked (Glycyl lysine isopeptide (Lys-Gly) (interchain with G-Cter in SAMP2)).

Belongs to the TtcA family. CTU1/NCS6/ATPBD3 subfamily. In terms of assembly, interacts with monomeric and polymeric forms of SAMP2. Interacts with UbaA. Interacts with archaeal EF-1-alpha and Pan1. Non-sampylated protein forms a complex with archaeal CPSF1 of approximately 100 kDa. In terms of processing, sampylated at Lys-204 with the archaeal ubiquitin-like protein SAMP2. Polymeric chains of SAMP2 are also linked.

The protein operates within tRNA modification; 5-methoxycarbonylmethyl-2-thiouridine-tRNA biosynthesis. Its function is as follows. Required for thiolation of mcm(5)S(2)U at the wobble uridine position of tRNA specific for lysine (tRNA(Lys)). Probably acts by catalyzing adenylation of tRNA, an intermediate required for 2-thiolation. May also act as a sulfurtransferase that transfers sulfur from thiocarboxylated SAMP2 onto the uridine of tRNA at wobble position. Required for cell growth at elevated temperatures. The polypeptide is tRNA 2-thiolation protein NcsA (Haloferax volcanii (strain ATCC 29605 / DSM 3757 / JCM 8879 / NBRC 14742 / NCIMB 2012 / VKM B-1768 / DS2) (Halobacterium volcanii)).